The following is a 388-amino-acid chain: MKGKVVALLHKESTIGILLIIATLLALFLENSPLSSFYDSFLHTPVEIRFGALHIAKPLLLWVNDGLMAVFFFYVGLEIKREIVDGHLSQISQMTFPAIAALGGMVVPALLFASLNFHDEKALNGWAIPTATDIAFALGVLSLLGNRIPFSLKVFLMTLAIVDDLGAIIVIALFYTTKLSLTSLVVASIALTILFIMNRMCVISKGAYILVGVALWVSVLKSGVHATLAGVALALLIPYRINKNGKIYELTKQMEHGLHLWVNFFILPLFAFANAGVNLQNISMSELFGSVPMGIMLGLFIGKQLGVFGFGYLAVKLKIAKLPKESTLIQFYGVAVLAGIGFTMSLFIDSLAYEDAQIYQYADKLAVLIGSLLSGIWGYIVLSKSSAP.

A run of 12 helical transmembrane segments spans residues threonine 14–leucine 34, leucine 59–isoleucine 79, threonine 95–leucine 115, glycine 125–glycine 145, valine 154–phenylalanine 174, threonine 177–methionine 197, methionine 200–leucine 220, serine 222–asparagine 242, glycine 257–valine 277, isoleucine 295–valine 315, leucine 328–isoleucine 348, and alanine 362–leucine 382.

This sequence belongs to the NhaA Na(+)/H(+) (TC 2.A.33) antiporter family.

It is found in the cell inner membrane. The enzyme catalyses Na(+)(in) + 2 H(+)(out) = Na(+)(out) + 2 H(+)(in). Functionally, na(+)/H(+) antiporter that extrudes sodium in exchange for external protons. The protein is Na(+)/H(+) antiporter NhaA of Nitratiruptor sp. (strain SB155-2).